The primary structure comprises 493 residues: Vacuolar-processing enzyme (493 aa).

The N-terminal stretch at 1–34 (MAVHRSLLNKPTWCRVAFWWWMLVMVMRIQGTNG) is a signal peptide. A propeptide spanning residues 35–53 (KEQDSVIKLPTQEVDAESD) is cleaved from the precursor. His176 is an active-site residue. Cys218 (nucleophile) is an active-site residue. Cys251 and Cys265 are oxidised to a cystine. N-linked (GlcNAc...) asparagine glycosylation occurs at Asn318. Disulfide bonds link Cys429/Cys459 and Cys441/Cys476.

It belongs to the peptidase C13 family.

In terms of biological role, asparagine-specific endopeptidase involved in the processing of vacuolar seed protein precursors into the mature forms. The chain is Vacuolar-processing enzyme from Phaseolus vulgaris (Kidney bean).